Here is a 639-residue protein sequence, read N- to C-terminus: MEPAMEPETLEARINRATNPLNKELDWASINGFCEQLNEDFEGPPLATRLLAHKIQSPQEWEAIQALTVLETCMKSCGKRFHDEVGKFRFLNELIKVVSPKYLGSRTSEKVKNKILELLYSWTVGLPEEVKIAEAYQMLKKQGIVKSDPKLPDDTTFPLPPPRPKNVIFEDEEKSKMLARLLKSSHPEDLRAANKLIKEMVQEDQKRMEKISKRVNAIEEVNNNVKLLTEMVMSHSQGGAAAGSSEDLMKELYQRCERMRPTLFRLASDTEDNDEALAEILQANDNLTQVINLYKQLVRGEEVNGDATAGSIPGSTSALLDLSGLDLPPAGTTYPAMPTRPGEQASPEQPSASVSLLDDELMSLGLSDPTPPSGPSLDGTGWNSFQSSDATEPPAPALAQAPSMESRPPAQTSLPASSGLDDLDLLGKTLLQQSLPPESQQVRWEKQQPTPRLTLRDLQNKSSSCSSPSSSATSLLHTVSPEPPRPPQQPVPTELSLASITVPLESIKPSNILPVTVYDQHGFRILFHFARDPLPGRSDVLVVVVSMLSTAPQPIRNIVFQSAVPKVMKVKLQPPSGTELPAFNPIVHPSAITQVLLLANPQKEKVRLRYKLTFTMGDQTYNEMGDVDQFPPPETWGSL.

N-acetylmethionine is present on Met1. The VHS domain maps to 17-147 (ATNPLNKELD…MLKKQGIVKS (131 aa)). The interaction with ARF3 stretch occupies residues 114 to 274 (KILELLYSWT…RLASDTEDND (161 aa)). The 129-residue stretch at 171-299 (DEEKSKMLAR…VINLYKQLVR (129 aa)) folds into the GAT domain. Ser185 bears the Phosphoserine mark. Positions 300–509 (GEEVNGDATA…ITVPLESIKP (210 aa)) are unstructured hinge. Disordered stretches follow at residues 320–421 (LDLS…SGLD) and 434–492 (SLPP…QPVP). Ser355 is modified (phosphoserine; by CK2). Positions 358–362 (DDELM) match the Autoinhibitory motif. Residues 381–390 (GWNSFQSSDA) are compositionally biased toward polar residues. Ser418 is modified (phosphoserine). Positions 462 to 480 (SSSCSSPSSSATSLLHTVS) are enriched in low complexity. Pro residues predominate over residues 481 to 490 (PEPPRPPQQP). The GAE domain occupies 510–631 (SNILPVTVYD…NEMGDVDQFP (122 aa)).

It belongs to the GGA protein family. As to quaternary structure, monomer. Interacts with GGA2 and GGA3. Binds to clathrin and activated ARFs, including ARF1, ARF5 and ARF6. Interacts with RABEP1. Interacts with RABGEF1. Interacts with the type-I membrane proteins LRP3, M6PR/CD-MPR and IGF2R/CI-MPR. Interacts (via N-terminal VHS domain) with SORL1/sorLA and SORT1 (via C-terminal cytosolic domain). Interacts with EPN4. Interacts with CCDC91. Interacts with HEATR5B/p200a. Interacts with SYNRG/gamma-synergin. Interacts (via GAE doamin) with NECAP1 and NECAP2. Interacts (via GAE domain) with AFTPH/aftiphilin. Interacts with TSG101 and UBC. Interacts with RNF11. Interacts (via VHS domain) with BACE1 (via DXXLL motif); the interaction highly increases when BACE1 is phosphorylated at 'Ser-498'. Interacts with CNST. Interacts with ADRA2B. Interacts with ARL3; the interaction recruits, in collaboration with RABEP1, PKD1:PKD2 complex to trans-Golgi network and is required for ciliary targeting. Phosphorylated by CK2 and dephosphorylated by PP2A. Phosphorylation of GGA1 allows the internal DXXLL motif to bind the VHS domain and to inhibit the recognition of cargo signals. In terms of processing, ubiquitinated. Ubiquitously expressed.

It is found in the golgi apparatus. It localises to the trans-Golgi network membrane. The protein localises to the endosome membrane. The protein resides in the early endosome membrane. Its function is as follows. Plays a role in protein sorting and trafficking between the trans-Golgi network (TGN) and endosomes. Mediates the ARF-dependent recruitment of clathrin to the TGN and binds ubiquitinated proteins and membrane cargo molecules with a cytosolic acidic cluster-dileucine (DXXLL) motif. Mediates export of the GPCR receptor ADRA2B to the cell surface. Required for targeting PKD1:PKD2 complex from the trans-Golgi network to the cilium membrane. Regulates retrograde transport of proteins such as phosphorylated form of BACE1 from endosomes to the trans-Golgi network. The protein is ADP-ribosylation factor-binding protein GGA1 (GGA1) of Homo sapiens (Human).